Here is a 363-residue protein sequence, read N- to C-terminus: 3-isopropylmalate dehydrogenase (363 aa).

Position 79–92 (79–92) interacts with NAD(+); that stretch reads GPKWEHLPPNDQPE. The substrate site is built by R100, R110, R139, and D228. Mg(2+) is bound by residues D228, D252, and D256. An NAD(+)-binding site is contributed by 286–298; the sequence is GSAPDIAGKNIAN.

The protein belongs to the isocitrate and isopropylmalate dehydrogenases family. LeuB type 1 subfamily. In terms of assembly, homodimer. Mg(2+) is required as a cofactor. Requires Mn(2+) as cofactor.

The protein localises to the cytoplasm. It carries out the reaction (2R,3S)-3-isopropylmalate + NAD(+) = 4-methyl-2-oxopentanoate + CO2 + NADH. The protein operates within amino-acid biosynthesis; L-leucine biosynthesis; L-leucine from 3-methyl-2-oxobutanoate: step 3/4. Its function is as follows. Catalyzes the oxidation of 3-carboxy-2-hydroxy-4-methylpentanoate (3-isopropylmalate) to 3-carboxy-4-methyl-2-oxopentanoate. The product decarboxylates to 4-methyl-2 oxopentanoate. The sequence is that of 3-isopropylmalate dehydrogenase from Vibrio parahaemolyticus serotype O3:K6 (strain RIMD 2210633).